Here is a 181-residue protein sequence, read N- to C-terminus: Regulator of G-protein signaling 5 (181 aa).

Residues 64–180 (SLDKLLQNSY…VRSEFYKELI (117 aa)) form the RGS domain.

As to expression, expressed in heart and muscle.

It is found in the cytoplasm. The protein localises to the membrane. Functionally, inhibits signal transduction by increasing the GTPase activity of G protein alpha subunits thereby driving them into their inactive GDP-bound form. Binds to G(i)-alpha and G(o)-alpha, but not to G(s)-alpha. In Mus musculus (Mouse), this protein is Regulator of G-protein signaling 5 (Rgs5).